A 162-amino-acid chain; its full sequence is uncharacterized protein (162 aa).

5 consecutive transmembrane segments (helical) span residues 15–40, 47–66, 76–98, 105–124, and 128–150; these read TIYS…YFLL, ISML…TTAL, YSIL…FLVY, KWLG…DPLL, and GYAV…WLVI.

It localises to the cell membrane. This is an uncharacterized protein from Archaeoglobus fulgidus (strain ATCC 49558 / DSM 4304 / JCM 9628 / NBRC 100126 / VC-16).